The primary structure comprises 971 residues: Exportin-2 (971 aa).

An N-acetylmethionine modification is found at M1. Positions 29–102 constitute an Importin N-terminal domain; it reads AEKFLESVEG…KANIVHLMLS (74 aa). Residue S112 is modified to Phosphoserine. 2 positions are modified to N6-acetyllysine: K574 and K824. S931 carries the phosphoserine modification.

It belongs to the XPO2/CSE1 family. Found in a complex with CSE1L/XPO2, Ran and KPNA2. Binds with high affinity to importin-alpha only in the presence of RanGTP. The complex is dissociated by the combined action of RanBP1 and RanGAP1. Interacts with CFTR. Ubiquitous. Detected in embryos from 5 to 17 dpc. Highly expressed in adult testis, heart, brain, lung, liver, skeletal muscle, spleen and kidney.

The protein resides in the cytoplasm. It is found in the nucleus. Functionally, export receptor for importin-alpha. Mediates importin-alpha re-export from the nucleus to the cytoplasm after import substrates (cargos) have been released into the nucleoplasm. In the nucleus binds cooperatively to importin-alpha and to the GTPase Ran in its active GTP-bound form. Docking of this trimeric complex to the nuclear pore complex (NPC) is mediated through binding to nucleoporins. Upon transit of a nuclear export complex into the cytoplasm, disassembling of the complex and hydrolysis of Ran-GTP to Ran-GDP (induced by RANBP1 and RANGAP1, respectively) cause release of the importin-alpha from the export receptor. CSE1L/XPO2 then return to the nuclear compartment and mediate another round of transport. The directionality of nuclear export is thought to be conferred by an asymmetric distribution of the GTP- and GDP-bound forms of Ran between the cytoplasm and nucleus. The protein is Exportin-2 (Cse1l) of Mus musculus (Mouse).